The primary structure comprises 89 residues: UPF0223 protein BCA_4066 (89 aa).

Belongs to the UPF0223 family.

This is UPF0223 protein BCA_4066 from Bacillus cereus (strain 03BB102).